The primary structure comprises 127 residues: UPF0102 protein Glov_2230 (127 aa).

It belongs to the UPF0102 family.

This is UPF0102 protein Glov_2230 from Trichlorobacter lovleyi (strain ATCC BAA-1151 / DSM 17278 / SZ) (Geobacter lovleyi).